A 232-amino-acid chain; its full sequence is MENQPKLNSSKEVIAFLAERFPHCFSAEGEARPLKIGIFQDLVDRVAGEMNLSKTQLRSALRLYTSSWRYLYGVKPGTTRVDLDGNPCGELDEQHVEHARKQLEEAKARVQAQRAEQQAKKREAAAAAGEKEDAPRRERKPRPTTPRRKEGAERKPRAQKPVEKAPKTVKAPREEQHTPVSDISALTVGQALKVKAGQNAMDATVLEITKDGVRVQLNSGMSLIVRAEHLVF.

The disordered stretch occupies residues 105–182; it reads EAKARVQAQR…REEQHTPVSD (78 aa). Positions 117–136 are enriched in basic and acidic residues; sequence QQAKKREAAAAAGEKEDAPR. The segment covering 137–146 has biased composition (basic residues); that stretch reads RERKPRPTTP. The span at 147-177 shows a compositional bias: basic and acidic residues; sequence RRKEGAERKPRAQKPVEKAPKTVKAPREEQH.

This sequence belongs to the ProQ family.

It is found in the cytoplasm. RNA chaperone with significant RNA binding, RNA strand exchange and RNA duplexing activities. May regulate ProP activity through an RNA-based, post-transcriptional mechanism. This chain is RNA chaperone ProQ, found in Shigella boydii serotype 18 (strain CDC 3083-94 / BS512).